Reading from the N-terminus, the 287-residue chain is uncharacterized protein (287 aa).

GTP is bound by residues 43-50 (GKTGVGKS), 90-93 (DLPG), and 156-159 (DKAE). Positions 48-138 (GKSSLCNALF…LTVDEHFYHQ (91 aa)) constitute a G domain.

It to E.coli YfjP and YeeP.

This is an uncharacterized protein from Escherichia coli (strain K12).